The primary structure comprises 1226 residues: Cytosolic carboxypeptidase 1 (1226 aa).

Residues 599–619 (TEDDEDTESNSSVEQASVEVP) are disordered. The Peptidase M14 domain occupies 848 to 1138 (YPYTYSTLQM…KFCVGLLRLK (291 aa)). 3 residues coordinate Zn(2+): His920, Glu923, and His1017. Glu1102 (proton donor/acceptor) is an active-site residue. The residue at position 1168 (Ser1168) is a Phosphoserine. The segment at 1206 to 1226 (YEPSAQEEVLSDSELSRTYLP) is disordered.

Belongs to the peptidase M14 family. As to quaternary structure, interacts with MYLK. Requires Zn(2+) as cofactor.

The protein localises to the cytoplasm. The protein resides in the cytosol. It is found in the nucleus. It localises to the mitochondrion. The enzyme catalyses (L-glutamyl)(n+1)-gamma-L-glutamyl-L-glutamyl-[protein] + H2O = (L-glutamyl)(n)-gamma-L-glutamyl-L-glutamyl-[protein] + L-glutamate. It carries out the reaction C-terminal L-alpha-aminoacyl-L-glutamyl-L-glutamyl-[tubulin] + H2O = C-terminal L-alpha-aminoacyl-L-glutamyl-[tubulin] + L-glutamate. In terms of biological role, metallocarboxypeptidase that mediates protein deglutamylation of tubulin and non-tubulin target proteins. Catalyzes the removal of polyglutamate side chains present on the gamma-carboxyl group of glutamate residues within the C-terminal tail of alpha- and beta-tubulin. Specifically cleaves tubulin long-side-chains, while it is not able to remove the branching point glutamate. Also catalyzes the removal of polyglutamate residues from the carboxy-terminus of alpha-tubulin as well as non-tubulin proteins such as MYLK. Involved in KLF4 deglutamylation which promotes KLF4 proteasome-mediated degradation, thereby negatively regulating cell pluripotency maintenance and embryogenesis. This chain is Cytosolic carboxypeptidase 1, found in Homo sapiens (Human).